Consider the following 198-residue polypeptide: Holliday junction resolvase RecU (198 aa).

The segment at 1-21 is disordered; sequence MVNYPHKLSSQKRQPSLSQPK. Over residues 11-21 the composition is skewed to polar residues; that stretch reads QKRQPSLSQPK. 4 residues coordinate Mg(2+): Thr81, Asp83, Glu96, and Gln115.

The protein belongs to the RecU family. Mg(2+) serves as cofactor.

The protein localises to the cytoplasm. It catalyses the reaction Endonucleolytic cleavage at a junction such as a reciprocal single-stranded crossover between two homologous DNA duplexes (Holliday junction).. Its function is as follows. Endonuclease that resolves Holliday junction intermediates in genetic recombination. Cleaves mobile four-strand junctions by introducing symmetrical nicks in paired strands. Promotes annealing of linear ssDNA with homologous dsDNA. Required for DNA repair, homologous recombination and chromosome segregation. In Streptococcus pneumoniae (strain ATCC 700669 / Spain 23F-1), this protein is Holliday junction resolvase RecU.